The chain runs to 430 residues: Long-chain specific acyl-CoA dehydrogenase, mitochondrial (430 aa).

The N-terminal 30 residues, 1-30 (MAARLLLRSLRVLKARSAPRPPPSARCSHS), are a transit peptide targeting the mitochondrion. Positions 17 to 39 (SAPRPPPSARCSHSGAEARLETP) are disordered. Position 42 is an N6-acetyllysine (lysine 42). Serine 54 and serine 55 each carry phosphoserine. N6-acetyllysine; alternate is present on residues lysine 66 and lysine 81. Residues lysine 66 and lysine 81 each carry the N6-succinyllysine; alternate modification. Residues lysine 92 and lysine 95 each carry the N6-acetyllysine modification. An N6-succinyllysine modification is found at lysine 165. 170–179 (IAMTEPGAGS) serves as a coordination point for FAD. Serine 179 is a substrate binding site. Serine 191 is subject to Phosphoserine. FAD is bound at residue 203–205 (FIT). 227–228 (AH) lines the substrate pocket. N6-succinyllysine is present on lysine 240. An N6-acetyllysine; alternate mark is found at lysine 254 and lysine 279. 2 positions are modified to N6-succinyllysine; alternate: lysine 254 and lysine 279. Substrate is bound by residues tyrosine 282 and 289–292 (PQER). Residue glutamate 291 is the Proton acceptor of the active site. Position 317 (arginine 317) interacts with FAD. Residue lysine 318 is modified to N6-acetyllysine. At lysine 322 the chain carries N6-acetyllysine; alternate. Lysine 322 carries the N6-succinyllysine; alternate modification. Glutamine 328 contributes to the FAD binding site. An N6-acetyllysine modification is found at lysine 358. Position 362 is a phosphoserine (serine 362). 385–389 (QLHGG) provides a ligand contact to FAD. 412 to 413 (GG) is a binding site for substrate. 414-416 (TNE) contacts FAD.

It belongs to the acyl-CoA dehydrogenase family. As to quaternary structure, homotetramer. The cofactor is FAD. Post-translationally, acetylation at Lys-318 and Lys-322 in proximity of the cofactor-binding sites strongly reduces catalytic activity. These sites are deacetylated by SIRT3. In terms of tissue distribution, expressed in heart, skeletal muscle, kidney, and brain. Expressed in liver (at protein level).

The protein resides in the mitochondrion matrix. It carries out the reaction a long-chain 2,3-saturated fatty acyl-CoA + oxidized [electron-transfer flavoprotein] + H(+) = a long-chain (2E)-enoyl-CoA + reduced [electron-transfer flavoprotein]. The enzyme catalyses oxidized [electron-transfer flavoprotein] + hexadecanoyl-CoA + H(+) = (2E)-hexadecenoyl-CoA + reduced [electron-transfer flavoprotein]. It catalyses the reaction hexanoyl-CoA + oxidized [electron-transfer flavoprotein] + H(+) = (2E)-hexenoyl-CoA + reduced [electron-transfer flavoprotein]. The catalysed reaction is octanoyl-CoA + oxidized [electron-transfer flavoprotein] + H(+) = (2E)-octenoyl-CoA + reduced [electron-transfer flavoprotein]. It carries out the reaction decanoyl-CoA + oxidized [electron-transfer flavoprotein] + H(+) = (2E)-decenoyl-CoA + reduced [electron-transfer flavoprotein]. The enzyme catalyses dodecanoyl-CoA + oxidized [electron-transfer flavoprotein] + H(+) = (2E)-dodecenoyl-CoA + reduced [electron-transfer flavoprotein]. It catalyses the reaction tetradecanoyl-CoA + oxidized [electron-transfer flavoprotein] + H(+) = (2E)-tetradecenoyl-CoA + reduced [electron-transfer flavoprotein]. The catalysed reaction is octadecanoyl-CoA + oxidized [electron-transfer flavoprotein] + H(+) = (2E)-octadecenoyl-CoA + reduced [electron-transfer flavoprotein]. It carries out the reaction eicosanoyl-CoA + oxidized [electron-transfer flavoprotein] + H(+) = (2E)-eicosenoyl-CoA + reduced [electron-transfer flavoprotein]. The enzyme catalyses docosanoyl-CoA + oxidized [electron-transfer flavoprotein] + H(+) = (2E)-docosenoyl-CoA + reduced [electron-transfer flavoprotein]. It catalyses the reaction tetracosanoyl-CoA + oxidized [electron-transfer flavoprotein] + H(+) = (2E)-tetracosenoyl-CoA + reduced [electron-transfer flavoprotein]. The catalysed reaction is (5E)-tetradecenoyl-CoA + oxidized [electron-transfer flavoprotein] + H(+) = (2E,5E)-tetradecadienoyl-CoA + reduced [electron-transfer flavoprotein]. It carries out the reaction (5Z)-tetradecenoyl-CoA + oxidized [electron-transfer flavoprotein] + H(+) = (2E,5Z)-tetradecadienoyl-CoA + reduced [electron-transfer flavoprotein]. The enzyme catalyses oxidized [electron-transfer flavoprotein] + (9Z)-octadecenoyl-CoA + H(+) = (2E,9Z)-octadecadienoyl-CoA + reduced [electron-transfer flavoprotein]. Its pathway is lipid metabolism; mitochondrial fatty acid beta-oxidation. Functionally, long-chain specific acyl-CoA dehydrogenase is one of the acyl-CoA dehydrogenases that catalyze the first step of mitochondrial fatty acid beta-oxidation, an aerobic process breaking down fatty acids into acetyl-CoA and allowing the production of energy from fats. The first step of fatty acid beta-oxidation consists in the removal of one hydrogen from C-2 and C-3 of the straight-chain fatty acyl-CoA thioester, resulting in the formation of trans-2-enoyl-CoA. Among the different mitochondrial acyl-CoA dehydrogenases, long-chain specific acyl-CoA dehydrogenase can act on saturated and unsaturated acyl-CoAs with 6 to 24 carbons with a preference for 8 to 18 carbons long primary chains. The polypeptide is Long-chain specific acyl-CoA dehydrogenase, mitochondrial (Mus musculus (Mouse)).